Here is a 532-residue protein sequence, read N- to C-terminus: Cytokinin dehydrogenase 1 (532 aa).

A signal peptide spans 1–17 (MAAIYLLIAALIASSHA). N-linked (GlcNAc...) asparagine glycans are attached at residues asparagine 52 and asparagine 63. Residues 65–244 (TAALPAAVLF…TRARVAVEPA (180 aa)) form the FAD-binding PCMH-type domain. FAD contacts are provided by phenylalanine 100, glycine 102, arginine 103, and glycine 104. Position 105 is a pros-8alpha-FAD histidine (histidine 105). FAD contacts are provided by serine 106 and glutamine 110. The N-linked (GlcNAc...) asparagine glycan is linked to asparagine 133. Aspartate 168, threonine 173, serine 179, valine 183, and isoleucine 234 together coordinate FAD. N-linked (GlcNAc...) asparagine glycans are attached at residues asparagine 321 and asparagine 432. 3 residues coordinate FAD: tyrosine 490, serine 525, and glutamine 528.

It belongs to the oxygen-dependent FAD-linked oxidoreductase family. As to quaternary structure, monomer. Requires FAD as cofactor.

Its subcellular location is the secreted. The protein localises to the extracellular space. It carries out the reaction N(6)-dimethylallyladenine + A + H2O = 3-methyl-2-butenal + adenine + AH2. Functionally, catalyzes the oxidation of cytokinins, a family of N(6)-substituted adenine derivatives that are plant hormones, where the substituent is an isopentenyl group. The polypeptide is Cytokinin dehydrogenase 1 (CKX1) (Oryza sativa subsp. japonica (Rice)).